Consider the following 296-residue polypeptide: Phosphatidylglycerol--prolipoprotein diacylglyceryl transferase (296 aa).

4 helical membrane-spanning segments follow: residues 10 to 30 (IAFS…LAAF), 57 to 77 (LLFY…MLFY), 92 to 112 (VWEG…ACWL), and 119 to 139 (LHFF…LGFG). R140 contributes to the a 1,2-diacyl-sn-glycero-3-phospho-(1'-sn-glycerol) binding site. Helical transmembrane passes span 194 to 214 (QLYE…TFSM), 220 to 240 (YAVS…VEFV), and 254 to 274 (WLTM…VLLA).

Belongs to the Lgt family.

The protein localises to the cell inner membrane. The enzyme catalyses L-cysteinyl-[prolipoprotein] + a 1,2-diacyl-sn-glycero-3-phospho-(1'-sn-glycerol) = an S-1,2-diacyl-sn-glyceryl-L-cysteinyl-[prolipoprotein] + sn-glycerol 1-phosphate + H(+). Its pathway is protein modification; lipoprotein biosynthesis (diacylglyceryl transfer). Catalyzes the transfer of the diacylglyceryl group from phosphatidylglycerol to the sulfhydryl group of the N-terminal cysteine of a prolipoprotein, the first step in the formation of mature lipoproteins. The protein is Phosphatidylglycerol--prolipoprotein diacylglyceryl transferase of Xanthomonas euvesicatoria pv. vesicatoria (strain 85-10) (Xanthomonas campestris pv. vesicatoria).